Consider the following 514-residue polypeptide: Cytochrome P450 71AP13 (514 aa).

A helical membrane pass occupies residues 20–37; sequence HSSLFAFSLLILLLKFIY. Residues N127 and N184 are each glycosylated (N-linked (GlcNAc...) asparagine). C455 serves as a coordination point for heme.

It belongs to the cytochrome P450 family. The cofactor is heme. As to expression, expressed in fruit kernel, seedlings, leaves and stems.

It localises to the membrane. The polypeptide is Cytochrome P450 71AP13 (Prunus mume (Japanese apricot)).